A 237-amino-acid polypeptide reads, in one-letter code: Apoptosis regulator OPG045 (237 aa).

Belongs to the orthopoxvirus OPG045 family. Interacts with host BAK1, BAX and BID.

The protein resides in the host mitochondrion outer membrane. It is found in the host cytoplasm. In terms of biological role, plays a role in the inhibition of host apoptosis. Interacts with host BAX and thereby inhibits its activity. The sequence is that of Apoptosis regulator OPG045 (OPG045) from Homo sapiens (Human).